The chain runs to 245 residues: 2,3-bisphosphoglycerate-dependent phosphoglycerate mutase (245 aa).

Residues 9–16 (RHGESEWN), 22–23 (TG), Arg61, 88–91 (ERHY), Lys99, 115–116 (RR), and 181–182 (GN) contribute to the substrate site. The active-site Tele-phosphohistidine intermediate is His10. The Proton donor/acceptor role is filled by Glu88.

The protein belongs to the phosphoglycerate mutase family. BPG-dependent PGAM subfamily.

The enzyme catalyses (2R)-2-phosphoglycerate = (2R)-3-phosphoglycerate. It functions in the pathway carbohydrate degradation; glycolysis; pyruvate from D-glyceraldehyde 3-phosphate: step 3/5. In terms of biological role, catalyzes the interconversion of 2-phosphoglycerate and 3-phosphoglycerate. The sequence is that of 2,3-bisphosphoglycerate-dependent phosphoglycerate mutase from Nocardia farcinica (strain IFM 10152).